The following is a 496-amino-acid chain: Inosine-5'-monophosphate dehydrogenase (496 aa).

CBS domains are found at residues V96–V152 and M156–A212. NAD(+) is bound by residues D247 and G299 to G301. Residues G301 and G303 each contribute to the K(+) site. S304 is an IMP binding site. K(+) is bound at residue C306. Catalysis depends on C306, which acts as the Thioimidate intermediate. IMP-binding positions include D339 to G341, G362 to S363, and Y386 to G390. R405 acts as the Proton acceptor in catalysis. An IMP-binding site is contributed by E423. Residues E477, S478, and H479 each contribute to the K(+) site.

The protein belongs to the IMPDH/GMPR family. Homotetramer. It depends on K(+) as a cofactor.

The enzyme catalyses IMP + NAD(+) + H2O = XMP + NADH + H(+). The protein operates within purine metabolism; XMP biosynthesis via de novo pathway; XMP from IMP: step 1/1. With respect to regulation, mycophenolic acid (MPA) is a non-competitive inhibitor that prevents formation of the closed enzyme conformation by binding to the same site as the amobile flap. In contrast, mizoribine monophosphate (MZP) is a competitive inhibitor that induces the closed conformation. MPA is a potent inhibitor of mammalian IMPDHs but a poor inhibitor of the bacterial enzymes. MZP is a more potent inhibitor of bacterial IMPDH. Its function is as follows. Catalyzes the conversion of inosine 5'-phosphate (IMP) to xanthosine 5'-phosphate (XMP), the first committed and rate-limiting step in the de novo synthesis of guanine nucleotides, and therefore plays an important role in the regulation of cell growth. The chain is Inosine-5'-monophosphate dehydrogenase from Methanocaldococcus jannaschii (strain ATCC 43067 / DSM 2661 / JAL-1 / JCM 10045 / NBRC 100440) (Methanococcus jannaschii).